The chain runs to 580 residues: Purine permease (580 aa).

The next 12 membrane-spanning stretches (helical) occupy residues 68-88 (PLVL…AGVI), 107-127 (SQYL…VQMF), 136-156 (YYVG…ITVA), 184-204 (YGAL…LSFM), 211-231 (ALFP…SLIG), 263-283 (LPWG…TIIL), 294-314 (SCAV…CGYF), 385-405 (LGNG…MSVF), 426-446 (CCFF…LVAI), 447-467 (PSSV…ISGV), 481-501 (FILT…DWFS), and 522-542 (LVMA…NLIL).

The protein belongs to the nucleobase:cation symporter-2 (NCS2) (TC 2.A.40) family.

It is found in the membrane. Able to transport with low efficiency all natural purines as well as purine analogs. The polypeptide is Purine permease (uapC) (Emericella nidulans (strain FGSC A4 / ATCC 38163 / CBS 112.46 / NRRL 194 / M139) (Aspergillus nidulans)).